The primary structure comprises 798 residues: Integrin beta-1 (798 aa).

The N-terminal stretch at 1–20 (MNLQLIFWIGLISSVCCVFG) is a signal peptide. Topologically, residues 21-728 (QADEDRCLKA…ETPECPTGPD (708 aa)) are extracellular. One can recognise a PSI domain in the interval 26–76 (RCLKANAKSCGECIQAGPNCGWCTNSTFLQEGMPTSARCDDLEALKKKGCH). 28 disulfide bridges follow: Cys-27–Cys-45, Cys-35–Cys-464, Cys-38–Cys-64, Cys-48–Cys-75, Cys-207–Cys-213, Cys-261–Cys-301, Cys-401–Cys-415, Cys-435–Cys-462, Cys-466–Cys-486, Cys-477–Cys-489, Cys-491–Cys-500, Cys-502–Cys-533, Cys-516–Cys-531, Cys-525–Cys-536, Cys-538–Cys-553, Cys-555–Cys-576, Cys-560–Cys-574, Cys-568–Cys-579, Cys-581–Cys-590, Cys-592–Cys-615, Cys-599–Cys-613, Cys-607–Cys-618, Cys-620–Cys-630, Cys-633–Cys-636, Cys-640–Cys-691, Cys-646–Cys-665, Cys-649–Cys-661, and Cys-699–Cys-723. Positions 75–91 (CHPNDTENPRGSKDIKK) are enriched in basic and acidic residues. The interval 75 to 105 (CHPNDTENPRGSKDIKKNKNVTNRSKGTAEK) is disordered. N-linked (GlcNAc...) asparagine glycans are attached at residues Asn-94 and Asn-97. Residues 140-378 (DYPIDLYYLM…QLIIDAYNSL (239 aa)) form the VWFA domain. Ser-152 and Ser-154 together coordinate Mg(2+). Positions 154, 157, 158, and 189 each coordinate Ca(2+). Residues 207-213 (CTNEQNC) form a CX3CL1-binding region. N-linked (GlcNAc...) asparagine glycosylation is present at Asn-212. Ca(2+)-binding residues include Asn-244, Asp-246, Pro-248, and Glu-249. Glu-249 lines the Mg(2+) pocket. An N-linked (GlcNAc...) asparagine glycan is attached at Asn-269. Residues 295 to 314 (LPNDGQCHLKNDVYTMSHYY) are CX3CL1-binding. Ala-362 lines the Ca(2+) pocket. An interaction with TMEM182 region spans residues 383–465 (ILENSKLPEG…IILQFICECE (83 aa)). Residues Asn-406 and Asn-417 are each glycosylated (N-linked (GlcNAc...) asparagine). I-EGF domains follow at residues 466 to 501 (CQGEGIPGSPKCHDGNGTFECGACRCNEGRVGRHCE), 502 to 554 (CSTD…KFCE), 555 to 591 (CDNFNCDRSNGLICGGNGVCKCRVCECNPNYTGSACD), and 592 to 631 (CSLDTTSCMAVNGQICNGRGVCECGACKCTDPKFQGPTCE). A glycan (N-linked (GlcNAc...) asparagine) is linked at Asn-481. Residue Asn-520 is glycosylated (N-linked (GlcNAc...) asparagine). An N-linked (GlcNAc...) asparagine glycan is attached at Asn-584. Asn-669 carries an N-linked (GlcNAc...) asparagine glycan. A helical transmembrane segment spans residues 729–749 (IIPIVAGVVAGIVLIGLALLL). Residues 750–798 (IWKLLMIIHDRREFAKFEKERMNAKWDTGENPIYKSAVTTVVNPKYEGK) are Cytoplasmic-facing. Residues 762-767 (EFAKFE) form a signal for sorting from recycling endosomes; interaction with ACAP1 region. The residue at position 777 (Thr-777) is a Phosphothreonine. Tyr-783 is modified (phosphotyrosine). Ser-785 carries the phosphoserine modification. Residues 785 to 792 (SAVTTVVN) form an interaction with ITGB1BP1 region. Thr-789 carries the post-translational modification Phosphothreonine. Lys-794 bears the N6-acetyllysine; alternate mark. Lys-794 participates in a covalent cross-link: Glycyl lysine isopeptide (Lys-Gly) (interchain with G-Cter in SUMO1); alternate.

It belongs to the integrin beta chain family. As to quaternary structure, interacts with seprase FAP (seprase); the interaction occurs at the cell surface of invadopodia membrane in a collagen-dependent manner. Heterodimer of an alpha and a beta subunit. Beta-1 associates with either alpha-1, alpha-2, alpha-3, alpha-4, alpha-5, alpha-6, alpha-7, alpha-8, alpha-9, alpha-10, alpha-11 or alpha-V. ITGA6:ITGB1 is found in a complex with CD9; interaction takes place in oocytes and is involved in sperm-egg fusion. Binds LGALS3BP and NMRK2, when associated with alpha-7, but not with alpha-5. Interacts with FLNA, FLNB, FLNC and RANBP9. Interacts with KRT1 in the presence of RACK1 and SRC. Interacts with JAML; integrin alpha-4/beta-1 may regulate leukocyte to endothelial cells adhesion by controlling JAML homodimerization. Interacts with RAB21. Interacts (via the cytoplasmic region) with RAB25 (via the hypervariable C-terminal region). Interacts with MYO10. Interacts with ITGB1BP1 (via C-terminal region); the interaction is a prerequisite for focal adhesion disassembly. Interacts with TLN1; the interaction is prevented by competitive binding of ITGB1BP1. Interacts with ACAP1; required for ITGB1 recycling. Interacts with ASAP3. Interacts with FERMT2; the interaction is inhibited in presence of ITGB1BP1. Interacts with DAB2. Interacts with FGR and HCK. Interacts with alpha-7A and alpha-7B in adult skeletal muscle. Interacts with alpha-7B in cardiomyocytes of adult heart. Interacts with EMP2; the interaction may be direct or indirect and ITGB1 has a heterodimer form. ITGA5:ITGB1 interacts with CCN3. ITGA4:ITGB1 is found in a ternary complex with CX3CR1 and CX3CL1. ITGA5:ITGB1 interacts with FBN1. ITGA5:ITGB1 acts as a receptor for fibronectin FN1 and mediates R-G-D-dependent cell adhesion to FN1. ITGA5:ITGB1 interacts with IL1B. Interacts with MDK. ITGA4:ITGB1 interacts with MDK; this interaction mediates MDK-induced osteoblast cells migration through PXN phosphorylation. ITGA6:ITGB1 interacts with MDK; this interaction mediates MDK-induced neurite-outgrowth. ITGA5:ITGB1 interacts with ACE2. Interacts with TMEM182 and LAMB1. Interacts with tensin TNS3; TNS3 also interacts with PEAK1, thus acting as an adapter molecule to bridge the association of PEAK1 with ITGB1. Interacts with tensin TNS4; the interaction displaces tensin TNS3 from the ITGB1 cytoplasmic tail and promotes ITGB1 stability. Integrin ITGA9:ITGB1 interacts with SPP1/OPN (via N-terminus). Integrin ITGA9:ITGB1 interacts with TNC/TNFN3 (via the 3rd Fibronectin type-III domain). Integrins ITGA4:ITGB1 and ITGA9:ITGB1 interact with SVEP1 (via Sushi domain 21); thereby inhibit Ca(2+) intracellular signaling and as a result repress vasocontraction. ITGA4:ITGB1 and ITGA5:ITGB1 interacts with SELP. Interacts with CD248. ITGA5:ITGB1 interacts with IGFBP1. ITGA4:ITGB1 interacts with BCAM. Interacts with ADGRG6.

It localises to the cell membrane. It is found in the cell projection. The protein localises to the invadopodium membrane. The protein resides in the ruffle membrane. Its subcellular location is the recycling endosome. It localises to the melanosome. It is found in the cell junction. The protein localises to the focal adhesion. The protein resides in the lamellipodium. Its subcellular location is the ruffle. In terms of biological role, integrins alpha-1/beta-1, alpha-2/beta-1, alpha-10/beta-1 and alpha-11/beta-1 are receptors for collagen. Integrins alpha-1/beta-1 and alpha-2/beta-2 recognize the proline-hydroxylated sequence G-F-P-G-E-R in collagen. Integrins alpha-2/beta-1, alpha-3/beta-1, alpha-4/beta-1, alpha-5/beta-1, alpha-8/beta-1, alpha-10/beta-1, alpha-11/beta-1 and alpha-V/beta-1 are receptors for fibronectin. Alpha-4/beta-1 recognizes one or more domains within the alternatively spliced CS-1 and CS-5 regions of fibronectin. Integrin alpha-5/beta-1 is a receptor for fibrinogen. Integrin alpha-1/beta-1, alpha-2/beta-1, alpha-6/beta-1 and alpha-7/beta-1 are receptors for lamimin. Integrin alpha-6/beta-1 (ITGA6:ITGB1) is present in oocytes and is involved in sperm-egg fusion. Integrin alpha-4/beta-1 is a receptor for VCAM1 and recognizes the sequence Q-I-D-S in VCAM1. Integrin alpha-9/beta-1 is a receptor for VCAM1, cytotactin and osteopontin. It recognizes the sequence A-E-I-D-G-I-E-L in cytotactin. Integrin alpha-3/beta-1 is a receptor for epiligrin, thrombospondin and CSPG4. Integrin alpha-3/beta-1 provides a docking site for FAP (seprase) at invadopodia plasma membranes in a collagen-dependent manner and hence may participate in the adhesion, formation of invadopodia and matrix degradation processes, promoting cell invasion. Alpha-3/beta-1 may mediate with LGALS3 the stimulation by CSPG4 of endothelial cells migration. Integrin alpha-V/beta-1 is a receptor for vitronectin. Beta-1 integrins recognize the sequence R-G-D in a wide array of ligands. When associated with alpha-7/beta-1 integrin, regulates cell adhesion and laminin matrix deposition. Involved in promoting endothelial cell motility and angiogenesis. Involved in osteoblast compaction through the fibronectin fibrillogenesis cell-mediated matrix assembly process and the formation of mineralized bone nodules. May be involved in up-regulation of the activity of kinases such as PKC via binding to KRT1. Together with KRT1 and RACK1, serves as a platform for SRC activation or inactivation. Plays a mechanistic adhesive role during telophase, required for the successful completion of cytokinesis. ITGA4:ITGB1 binds to fractalkine (CX3CL1) and may act as its coreceptor in CX3CR1-dependent fractalkine signaling. ITGA4:ITGB1 and ITGA5:ITGB1 bind to PLA2G2A via a site (site 2) which is distinct from the classical ligand-binding site (site 1) and this induces integrin conformational changes and enhanced ligand binding to site 1. ITGA5:ITGB1 acts as a receptor for fibrillin-1 (FBN1) and mediates R-G-D-dependent cell adhesion to FBN1. ITGA5:ITGB1 is a receptor for IL1B and binding is essential for IL1B signaling. ITGA5:ITGB3 is a receptor for soluble CD40LG and is required for CD40/CD40LG signaling. Plays an important role in myoblast differentiation and fusion during skeletal myogenesis. ITGA9:ITGB1 may play a crucial role in SVEP1/polydom-mediated myoblast cell adhesion. Integrins ITGA9:ITGB1 and ITGA4:ITGB1 repress PRKCA-mediated L-type voltage-gated channel Ca(2+) influx and ROCK-mediated calcium sensitivity in vascular smooth muscle cells via their interaction with SVEP1, thereby inhibit vasocontraction. This Camelus bactrianus (Bactrian camel) protein is Integrin beta-1.